A 2280-amino-acid chain; its full sequence is MKGHQFKSWIFELREILREIKNSHHFLDSWTQFNSVGSFIHIFFHQERFIKLLDPRIWSILLSRNSQGSTSNRYFTIKGVVLFVVAVLLYRINNRNMVERKNLYLTGLLPIPMNSIGPRNDTLEESFGSSNINRLIVSLLYLPKGKKISESCFLDPKESTWVLPITKKCIMPESNWGSRWWRNWIGKKRDSSCKISNETVAGIEISFKEKDIKYLEFLFVYYMDDPICKDHDWEFLDRLSPSKRRNIINLNSRQLFEILVKDWICYLMFAFREKIPIEVEGFFKQQGAGSTIQSNDIEPISHLFSRKKWAISLQNCAQFHMWQFRQDLFVSWGKNPPESDFLRNISRENWIWLDNVWLVNKDRFFSKVRNVSSNIQYDSTRSSFVQVTDSSQLKGSSDQSRDHFDSISNEDSEYHTLINQREIQQLKERSILWDPSFLQTERTELESDRFSKCLSGYSRLFTEREKEMKNHLLPEEIEEFLGNPTRSILSFFSDRWSELHLGSNPTERSTRDQKLLKKEQDVSFVPSRRSENKEIVNIFKIITYLQNTVSIHPISSDPGCDMVPKDELDMHSSHKISFLNKNTFFDLFHLFHDRNRGGYTLHHDFESEERFQEMADLFTLSISEPDLVYHKGFAFSMDSYVLDQKQFLNEVFNSRDESKKKSLLVLPPLFYEENESFYRRIRKKWVRISCGNDLEDPKPKIVVFASNNIMEAVNQYRWIRNLIQIQYSTYGYIRNVWNRFFLMNRSDRNFEYGIQRDQIGNDTLNHRTIMKYTINQHLSNLKKSQKKWFNPLIFISRTERSVNRDPNAYRYKWSNGSKNFQEHLEHFVSKQKSRFQVVFDRLRINQYSIDWSEVIDKKDLSKSLRFVLSKLLLFLSKFLLFLSNSLPFFFVSFGNTPIHRSEIHVYELKGPNDQLCNQLLESIGLQIVHLKKWKPLLLDDHDTSQKSKLLINGGTISPFFFNKIPKWMIDSFHTRNNRRKSFDNTDSYFSMISHDQDNWLNPVKPFHRSSLISSFYKANRLRFLNNPHHFCFYCNKRFPFYVERARINNSDFTYGQFLNILFIRNKIFSLCGGKKKYAFLERDTISPIESQVSNIFIPNDFPQSGDERSNLYKSFHFAIRSDPLVRRAIYSIADISGTPLTEGQIVNFERTYCQPLSDMNLSDSEGKNLYQYLNFNSNMGLIHTPCSEKYLPSEKRKKRSLCLKKCVEKGQMYRTFQRDSAFSTLSKWNLFQTYMPWFLTSTGYKYLNWIFLDTFSDLLPILSSSQKFVSIFHDIMHGSDISWQILQKKFCLPQWNLISEISSKCLHNLLLSEEMIHRNNESPLISTHLRSPNVREFLYSILFLLLVATYIVRTHLLFVSRAYSELQTEFEKVKSWMIPSYMMELRKLLDRYPTSELNSFWLKNLFLVALEKLGDSLEEIRGSASGGNMLWGGGPAYGFKSIRSKKKYWNINLIDLISIIPNPIHRITFSKKTRHLSHTSKEIYSLIRKRKNVNGDWIDDKIESWVANSDSIDDKEREFLVQFSTLTTEKGIDQILLSLTHSDHLSKNDSGYQMIEQPGAIYLRYLVDIHKKYLMNYEFNTFCLAERRIFLAHYQTITYSQTSCGTNSFHFTSHGKPFSLRLALSPSRGILVIGSIGTGRSYLVKYLATNSYVPFITVFLNKFLDNKPKGFLIDDIDIEDSDDIEDSDNIDRDLDTELELLTRMNALTMDMMPEIDRFYITLQFELAKAMSPCIIWIPNIHDLDVNESNYLSLGLLVNYLSRDCERCSTQNILVIASTHIPQKVDPALIAPNKLNTCIKIRRLLIPQQRKHFFTLSYTRGFHLEKKMFHTNGFGSITMGSNVRDLVALTNEALSISITQKKSILDTNTIRSALHRQTWDLRSQVRSVQDHGILFYQIGRAVAQNVLLSNCPIDPISIYMKKKSCNEGDSYLYKWYFELGTSMKKLTILLYLLSCSAGSIAQDLWSLPGPDEKNEITSYGLVENDSDLVHGLLEVEGALVGSSRTEKDYSQFDNDRVTLLLRPKPRNPLDMMQNGSCSIVDQRFLYEKYESEFEEGEGEGVLDPQQIEEDLFNHIVWAPRIWRPWGFLFDCIERPNSLGFPYWARSFRGKRIIYDEKEELQENDSEFLQSGTMQYQTRDRSSKEQGFFRISQFIWDPADPLFFLFKDQPFVSVFSHREFFADEEMSKGLLTSQTDSPTSIYKRWFIKNTQEKHFELLIHRQRWLRTNSSLSNGFFRSNTPSESYQYLSNLFLSNGRLLDQMTKTLLRKRWLFPDEMKIGFM.

G1634–S1641 is an ATP binding site.

It belongs to the Ycf2 family.

The protein resides in the plastid. Its subcellular location is the chloroplast stroma. Its function is as follows. Probable ATPase of unknown function. Its presence in a non-photosynthetic plant (Epifagus virginiana) and experiments in tobacco indicate that it has an essential function which is probably not related to photosynthesis. The polypeptide is Protein Ycf2 (Eucalyptus globulus subsp. globulus (Tasmanian blue gum)).